The following is a 271-amino-acid chain: Phosphate import ATP-binding protein PstB (271 aa).

The 242-residue stretch at 25–266 (FDTKNLNLWY…PSDKRTEDYI (242 aa)) folds into the ABC transporter domain. Residue 57 to 64 (GPSGCGKS) coordinates ATP.

It belongs to the ABC transporter superfamily. Phosphate importer (TC 3.A.1.7) family. As to quaternary structure, the complex is composed of two ATP-binding proteins (PstB), two transmembrane proteins (PstC and PstA) and a solute-binding protein (PstS).

It localises to the cell membrane. The enzyme catalyses phosphate(out) + ATP + H2O = ADP + 2 phosphate(in) + H(+). Its function is as follows. Part of the ABC transporter complex PstSACB involved in phosphate import. Responsible for energy coupling to the transport system. The polypeptide is Phosphate import ATP-binding protein PstB (Bacillus anthracis).